An 850-amino-acid chain; its full sequence is Polyhomeotic-like protein 2 (850 aa).

5 disordered regions span residues 1–79 (MENE…QYLQ), 233–314 (QQTP…RAVP), 335–386 (LPQP…DHAL), 402–436 (THVH…PPQR), and 528–553 (MTSG…KPPQ). Residues 15-32 (SVTTNTSGTNSSSGCISS) show a composition bias toward low complexity. Residues 33–56 (SGGGGGSGGRPTAPQISVYSGIPD) are interaction with BMI1. A compositionally biased stretch (low complexity) spans 343–352 (PQPQFVAQQQ). Polar residues-rich tracts occupy residues 368-380 (LASV…LQSS) and 402-425 (THVH…SQNG). The span at 529–543 (TSGNGNSASSIAGTA) shows a compositional bias: low complexity. An HD1 motif is present at residues 550-579 (KPPQAIVKPQILTHVIEGFVIQEGAEPFPV). Glycyl lysine isopeptide (Lys-Gly) (interchain with G-Cter in SUMO2) cross-links involve residues Lys590 and Lys592. Positions 597 to 624 (FLPEKPPQQDHTTTTDSEMEEPYLQESK) are disordered. Thr611 carries the phosphothreonine modification. The residue at position 613 (Ser613) is a Phosphoserine. A Glycyl lysine isopeptide (Lys-Gly) (interchain with G-Cter in SUMO2) cross-link involves residue Lys624. Residues 625-659 (EEGTPLKLKCELCGRVDFAYKFKRSKRFCSMACAK) form an FCS-type zinc finger. Residues Cys634, Cys637, Cys653, and Cys657 each coordinate Zn(2+). Disordered regions lie at residues 676 to 712 (RSKL…SGTV) and 725 to 764 (SQED…LDLP). Residue Lys694 forms a Glycyl lysine isopeptide (Lys-Gly) (interchain with G-Cter in SUMO2) linkage. Residues 696–712 (SLPTLTKDTKKQPSGTV) show a composition bias toward polar residues. Residue Ser743 is modified to Phosphoserine. In terms of domain architecture, SAM spans 786 to 850 (WNVEDVYEFI…YARISMLKDS (65 aa)). Residue Lys839 forms a Glycyl lysine isopeptide (Lys-Gly) (interchain with G-Cter in SUMO2) linkage.

In terms of assembly, component of a PRC1-like complex. Interacts with CBX4. Interacts with BMI1, PCGF2, PHC1 and RNF2. Interacts with CHTOP. Interacts with the N-terminal region of the SP1 transcription factor and with MAPKAPK2. Interacts with SAMD7. Interacts with SAMD11. As to expression, isoform 2 is ubiquitously expressed in embryos and adult tissues at much higher level than isoform 1.

The protein resides in the nucleus. Component of a Polycomb group (PcG) multiprotein PRC1-like complex, a complex class required to maintain the transcriptionally repressive state of many genes, including Hox genes, throughout development. PcG PRC1 complex acts via chromatin remodeling and modification of histones; it mediates monoubiquitination of histone H2A 'Lys-119', rendering chromatin heritably changed in its expressibility. This Mus musculus (Mouse) protein is Polyhomeotic-like protein 2 (Phc2).